Consider the following 298-residue polypeptide: Bifunctional protein FolD (298 aa).

Residues 165-167, Ser-190, and Ile-231 contribute to the NADP(+) site; that span reads GRS.

The protein belongs to the tetrahydrofolate dehydrogenase/cyclohydrolase family. As to quaternary structure, homodimer.

The catalysed reaction is (6R)-5,10-methylene-5,6,7,8-tetrahydrofolate + NADP(+) = (6R)-5,10-methenyltetrahydrofolate + NADPH. It carries out the reaction (6R)-5,10-methenyltetrahydrofolate + H2O = (6R)-10-formyltetrahydrofolate + H(+). Its pathway is one-carbon metabolism; tetrahydrofolate interconversion. Functionally, catalyzes the oxidation of 5,10-methylenetetrahydrofolate to 5,10-methenyltetrahydrofolate and then the hydrolysis of 5,10-methenyltetrahydrofolate to 10-formyltetrahydrofolate. This Prochlorococcus marinus (strain AS9601) protein is Bifunctional protein FolD.